We begin with the raw amino-acid sequence, 107 residues long: MREVVIASAARTAVGSFGGAFKSVSAVELGVTAAKEAIKRANITPDMIDESLLGGVLTAGLGQNIARQIALGAGIPVEKPAMTINIVCGSGLRSWRALRTRTGPRRR.

Catalysis depends on cysteine 88, which acts as the Acyl-thioester intermediate.

Belongs to the thiolase-like superfamily. Thiolase family. Homotetramer.

It is found in the cytoplasm. It carries out the reaction 2 acetyl-CoA = acetoacetyl-CoA + CoA. Functionally, catalyzes the condensation of two molecules of acetyl-CoA to produce acetoacetyl-CoA. The sequence is that of Acetyl-CoA acetyltransferase (thi) from Clostridioides difficile (Peptoclostridium difficile).